The following is a 29-amino-acid chain: Omega-conotoxin MVIIC (29 aa).

Positions Thr-1 to Arg-2 are excised as a propeptide. 3 cysteine pairs are disulfide-bonded: Cys-3/Cys-18, Cys-10/Cys-22, and Cys-17/Cys-28. The residue at position 28 (Cys-28) is a Cysteine amide.

This sequence belongs to the conotoxin O1 superfamily. Not hydroxylated; hydroxylation, on a synthetic hydroxylated MVIIC, has a significant impact on the oxidative folding but not on the biological activity. Expressed by the venom duct.

It is found in the secreted. Omega-conotoxins act at presynaptic membranes, they bind and block voltage-gated calcium channels (Cav). This toxin preferentially blocks P/Q-type calcium channels (Cav2.1/CACNA1A) (IC(50)=0.60 nM). Also shows an inhibition on Cav2.2/CACNA1A channels (IC(50)=7.0 nM). The protein is Omega-conotoxin MVIIC of Conus magus (Magical cone).